The following is a 229-amino-acid chain: Cytochrome c oxidase subunit 2 (229 aa).

Residues 1 to 26 (MSTWANLGLQDSASPLMEQLIFFHDH) are Mitochondrial intermembrane-facing. The chain crosses the membrane as a helical span at residues 27 to 48 (ALLILVMITVLVGYLMFMLFFN). Residues 49–62 (SYVNRFLLHGQLIE) are Mitochondrial matrix-facing. Residues 63-82 (MIWTILPAIILLFIAMPSLR) form a helical membrane-spanning segment. The Mitochondrial intermembrane portion of the chain corresponds to 83–229 (LLYLLDEINE…IKWISNSVNS (147 aa)). H161, C196, E198, C200, H204, and M207 together coordinate Cu cation. E198 contributes to the Mg(2+) binding site.

It belongs to the cytochrome c oxidase subunit 2 family. In terms of assembly, component of the cytochrome c oxidase (complex IV, CIV), a multisubunit enzyme composed of a catalytic core of 3 subunits and several supernumerary subunits. The complex exists as a monomer or a dimer and forms supercomplexes (SCs) in the inner mitochondrial membrane with ubiquinol-cytochrome c oxidoreductase (cytochrome b-c1 complex, complex III, CIII). Cu cation is required as a cofactor.

Its subcellular location is the mitochondrion inner membrane. The catalysed reaction is 4 Fe(II)-[cytochrome c] + O2 + 8 H(+)(in) = 4 Fe(III)-[cytochrome c] + 2 H2O + 4 H(+)(out). Its function is as follows. Component of the cytochrome c oxidase, the last enzyme in the mitochondrial electron transport chain which drives oxidative phosphorylation. The respiratory chain contains 3 multisubunit complexes succinate dehydrogenase (complex II, CII), ubiquinol-cytochrome c oxidoreductase (cytochrome b-c1 complex, complex III, CIII) and cytochrome c oxidase (complex IV, CIV), that cooperate to transfer electrons derived from NADH and succinate to molecular oxygen, creating an electrochemical gradient over the inner membrane that drives transmembrane transport and the ATP synthase. Cytochrome c oxidase is the component of the respiratory chain that catalyzes the reduction of oxygen to water. Electrons originating from reduced cytochrome c in the intermembrane space (IMS) are transferred via the dinuclear copper A center (CU(A)) of subunit 2 and heme A of subunit 1 to the active site in subunit 1, a binuclear center (BNC) formed by heme A3 and copper B (CU(B)). The BNC reduces molecular oxygen to 2 water molecules using 4 electrons from cytochrome c in the IMS and 4 protons from the mitochondrial matrix. This is Cytochrome c oxidase subunit 2 (mt:CoII) from Drosophila narragansett (Fruit fly).